A 471-amino-acid polypeptide reads, in one-letter code: Reticulon-2 (471 aa).

Disordered stretches follow at residues 1–137 (MGQV…ERPL), 153–181 (SAGS…ASEA), and 205–234 (QLSP…DDEP). Residues 14–25 (APSTASSTPDST) show a composition bias toward low complexity. The segment covering 32–43 (SDFRELHTAREF) has biased composition (basic and acidic residues). Ser44 carries the post-translational modification Phosphoserine. 2 stretches are compositionally biased toward polar residues: residues 100-118 (PQQS…LSQS) and 159-168 (DSATSSSTPL). Residues 169-181 (ENEEPDGLEASEA) are compositionally biased toward acidic residues. Positions 205–229 (QLSPSSGTPQAHTPSPQRSQDSNSG) are enriched in polar residues. Phosphoserine occurs at positions 226 and 228. Positions 272–471 (VADLLYWKDT…SVSGSKAKAE (200 aa)) constitute a Reticulon domain. Transmembrane regions (helical) follow at residues 295–315 (LLCL…LLGL) and 390–410 (LLFY…LVIL).

In terms of assembly, interacts with SPAST. Interacts with BACE1. Interacts (via first transmembrane domain) with ARL6IP5/GTRAP3-18. Interacts (via N-terminus) with SLC1A1/EAAC1; the interaction promotes cell surface expression of SLC1A1. As to expression, detected in skeletal and cardiac muscle (at protein level). Expressed predominantly in neural and muscular tissues.

It localises to the endoplasmic reticulum membrane. It is found in the sarcoplasmic reticulum membrane. Its subcellular location is the cell membrane. The protein localises to the sarcolemma. The protein resides in the T-tubule. It localises to the cytoplasm. It is found in the myofibril. Its subcellular location is the sarcomere. The protein localises to the z line. The protein resides in the cytoskeleton. Inhibits amyloid precursor protein processing, probably by blocking BACE1 activity. Enhances trafficking of the glutamate transporter SLC1A1/EAAC1 from the endoplasmic reticulum to the cell surface. Plays a role in the translocation of SLC2A4/GLUT4 from intracellular membranes to the cell membrane which facilitates the uptake of glucose into the cell. This chain is Reticulon-2, found in Mus musculus (Mouse).